Here is a 270-residue protein sequence, read N- to C-terminus: Phospholysine phosphohistidine inorganic pyrophosphate phosphatase (270 aa).

Residues D14 and S16 each contribute to the Mg(2+) site. Substrate contacts are provided by residues 14-16, 52-53, and K187; these read DVS and TN. Mg(2+) is bound at residue D212.

It belongs to the HAD-like hydrolase superfamily. Mg(2+) is required as a cofactor.

It localises to the cytoplasm. Its subcellular location is the nucleus. The catalysed reaction is diphosphate + H2O = 2 phosphate + H(+). Functionally, phosphatase that hydrolyzes imidodiphosphate, 3-phosphohistidine and 6-phospholysine. Has broad substrate specificity and can also hydrolyze inorganic diphosphate, but with lower efficiency. The polypeptide is Phospholysine phosphohistidine inorganic pyrophosphate phosphatase (lhpp) (Xenopus laevis (African clawed frog)).